The sequence spans 481 residues: Aspartyl/glutamyl-tRNA(Asn/Gln) amidotransferase subunit B (481 aa).

This sequence belongs to the GatB/GatE family. GatB subfamily. As to quaternary structure, heterotrimer of A, B and C subunits.

It carries out the reaction L-glutamyl-tRNA(Gln) + L-glutamine + ATP + H2O = L-glutaminyl-tRNA(Gln) + L-glutamate + ADP + phosphate + H(+). The catalysed reaction is L-aspartyl-tRNA(Asn) + L-glutamine + ATP + H2O = L-asparaginyl-tRNA(Asn) + L-glutamate + ADP + phosphate + 2 H(+). Functionally, allows the formation of correctly charged Asn-tRNA(Asn) or Gln-tRNA(Gln) through the transamidation of misacylated Asp-tRNA(Asn) or Glu-tRNA(Gln) in organisms which lack either or both of asparaginyl-tRNA or glutaminyl-tRNA synthetases. The reaction takes place in the presence of glutamine and ATP through an activated phospho-Asp-tRNA(Asn) or phospho-Glu-tRNA(Gln). This Prosthecochloris aestuarii (strain DSM 271 / SK 413) protein is Aspartyl/glutamyl-tRNA(Asn/Gln) amidotransferase subunit B.